The primary structure comprises 358 residues: MFDQLEIVEQRYEQLNELLSDPDIVSDTDKLREYSKEQADLQETVEVYREYKEVKQQLEEALEMMGEASDADEQEMIKEEINTLKPQIPELEERMKLLLIPKDPMDDKNVVMEIRGAAGGDEANIFAGDLFRMYSRFSEEQGWKIEVMETNEADHGGFKEISFIIIGKGAYSKLKFENGAHRVQRIPTTESGGRIHTSTATVAVLPEVEDVEIEIRQEDLRIETYRSSGSGGQHVNTTDSAVRITHIPTGIVATSSEKSQIKNREKALKLLKTRVFDAKLQEEQAKYSEQRKSAVGTGDRSERIRTYNYPQNRVTDHRIGLTIQKLDQIVEGKLGEIIDALTIAEQTSKLEALNDGVL.

Residue Gln233 is modified to N5-methylglutamine.

Belongs to the prokaryotic/mitochondrial release factor family. In terms of processing, methylated by PrmC. Methylation increases the termination efficiency of RF1.

It is found in the cytoplasm. Functionally, peptide chain release factor 1 directs the termination of translation in response to the peptide chain termination codons UAG and UAA. The sequence is that of Peptide chain release factor 1 from Macrococcus caseolyticus (strain JCSC5402) (Macrococcoides caseolyticum).